Here is a 393-residue protein sequence, read N- to C-terminus: O-phospho-L-seryl-tRNA:Cys-tRNA synthase 1 (393 aa).

Pyridoxal 5'-phosphate-binding positions include 85–86, asparagine 190, and 213–215; these read AR and SGH. The residue at position 216 (lysine 216) is an N6-(pyridoxal phosphate)lysine.

The protein belongs to the SepCysS family. Homodimer. Interacts with SepRS. The cofactor is pyridoxal 5'-phosphate.

The catalysed reaction is O-phospho-L-seryl-tRNA(Cys) + hydrogen sulfide + H(+) = L-cysteinyl-tRNA(Cys) + phosphate. Functionally, converts O-phospho-L-seryl-tRNA(Cys) (Sep-tRNA(Cys)) to L-cysteinyl-tRNA(Cys) (Cys-tRNA(Cys)). This Methanospirillum hungatei JF-1 (strain ATCC 27890 / DSM 864 / NBRC 100397 / JF-1) protein is O-phospho-L-seryl-tRNA:Cys-tRNA synthase 1.